A 166-amino-acid polypeptide reads, in one-letter code: Protein UL5 (166 aa).

Belongs to the RL11 family. As to quaternary structure, interacts with host IQGAP1.

Its subcellular location is the host cytoplasm. In terms of biological role, may play a role in rearrangement of cellular cytoskeleton towards an efficient viral assembly and spreading. In Human cytomegalovirus (strain AD169) (HHV-5), this protein is Protein UL5 (UL5).